The chain runs to 443 residues: Glutamyl-tRNA reductase (443 aa).

Residues T49–R52, S109, E114–Q116, and Q120 contribute to the substrate site. Catalysis depends on C50, which acts as the Nucleophile. NADP(+) is bound at residue G189–G194.

It belongs to the glutamyl-tRNA reductase family. As to quaternary structure, homodimer.

It catalyses the reaction (S)-4-amino-5-oxopentanoate + tRNA(Glu) + NADP(+) = L-glutamyl-tRNA(Glu) + NADPH + H(+). Its pathway is porphyrin-containing compound metabolism; protoporphyrin-IX biosynthesis; 5-aminolevulinate from L-glutamyl-tRNA(Glu): step 1/2. Its function is as follows. Catalyzes the NADPH-dependent reduction of glutamyl-tRNA(Glu) to glutamate 1-semialdehyde (GSA). In Bacillus mycoides (strain KBAB4) (Bacillus weihenstephanensis), this protein is Glutamyl-tRNA reductase.